Reading from the N-terminus, the 567-residue chain is Probable E3 ubiquitin-protein ligase ARI8 (567 aa).

Residues 1-27 form a disordered region; sequence MEADDDFYSGTENYSDYADSDEDDADG. A compositionally biased stretch (acidic residues) spans 18-27; the sequence is ADSDEDDADG. The TRIAD supradomain stretch occupies residues 124 to 337; it reads GELDCGICFE…GGFYACNRYE (214 aa). 18 residues coordinate Zn(2+): C128, C131, C145, H147, C150, C153, C173, C178, C217, C222, C239, C241, C246, C249, H254, C259, C286, and C289. The RING-type 1 zinc finger occupies 128–178; sequence CGICFETFLSDKLHAAACGHPFCDSCWEGYITTAINDGPGCLTLRCPDPSC. The IBR-type zinc finger occupies 197-259; sequence QKYTSYFVRS…AEEAHRPVDC (63 aa). The RING-type 2; atypical zinc-finger motif lies at 286–316; that stretch reads CPKCKRPIEKNQGCMHITCTPPCKFEFCWLC. Residue C299 is part of the active site. Zn(2+)-binding residues include C304, C308, C313, C316, H323, and C333. Residues 514–543 form a disordered region; that stretch reads DAYDRTSSSKSLGGKTKGSSSKASSSDSSH. Residues 521–542 show a composition bias toward low complexity; it reads SSKSLGGKTKGSSSKASSSDSS. The segment at 540–567 adopts a RanBP2-type zinc-finger fold; it reads DSSHWPCEYCTYVNPRSTTICQMCEHGR.

This sequence belongs to the RBR family. Ariadne subfamily. The cofactor is Zn(2+). Ubiquitous.

It catalyses the reaction [E2 ubiquitin-conjugating enzyme]-S-ubiquitinyl-L-cysteine + [acceptor protein]-L-lysine = [E2 ubiquitin-conjugating enzyme]-L-cysteine + [acceptor protein]-N(6)-ubiquitinyl-L-lysine.. It functions in the pathway protein modification; protein ubiquitination. In terms of biological role, might act as an E3 ubiquitin-protein ligase, or as part of E3 complex, which accepts ubiquitin from specific E2 ubiquitin-conjugating enzymes and then transfers it to substrates. This chain is Probable E3 ubiquitin-protein ligase ARI8 (ARI8), found in Arabidopsis thaliana (Mouse-ear cress).